The sequence spans 770 residues: Arf-GAP with coiled-coil, ANK repeat and PH domain-containing protein 2 (770 aa).

Residues 1-226 (MKMTVDFEEC…MKDLGAQLDR (226 aa)) form the BAR domain. Residues 266-361 (GIVMEGYLFK…WIKAVQTSIA (96 aa)) enclose the PH domain. Residues 371–391 (SEKLDKKSSPSTGSLDSGNES) form a disordered region. Polar residues predominate over residues 379 to 388 (SPSTGSLDSG). 2 positions are modified to phosphoserine: S384 and S387. An Arf-GAP domain is found at 399-520 (ESALQRVQCI…KFVDKYSALL (122 aa)). The segment at 414 to 437 (CCDCGLADPRWASINLGITLCIEC) adopts a C4-type zinc-finger fold. S521 is subject to Phosphoserine. The segment at 542 to 572 (ARASVHTPVKSNDSGIQQCSEDGRESLPSTV) is disordered. The span at 550 to 561 (VKSNDSGIQQCS) shows a compositional bias: polar residues. S573 and S576 each carry phosphoserine. ANK repeat units lie at residues 632-661 (NQAT…NVNQ), 665-694 (QGRG…NQHA), and 698-727 (EGKD…NEEM). A Phosphotyrosine modification is found at Y734. Phosphoserine is present on S767.

As to quaternary structure, interacts with RAB35 (GTP-bound form); the interaction is direct and probably recruits ACAP2 to membranes. Interacts with MICALL1; the interaction is indirect through RAB35.

Its subcellular location is the endosome membrane. The protein localises to the cell membrane. With respect to regulation, GAP activity stimulated by phosphatidylinositol 4,5-bisphosphate (PIP2) and phosphatidic acid. GTPase-activating protein (GAP) for ADP ribosylation factor 6 (ARF6). Doesn't show GAP activity for RAB35. The polypeptide is Arf-GAP with coiled-coil, ANK repeat and PH domain-containing protein 2 (Acap2) (Mus musculus (Mouse)).